Reading from the N-terminus, the 358-residue chain is UDP-N-acetylglucosamine--N-acetylmuramyl-(pentapeptide) pyrophosphoryl-undecaprenol N-acetylglucosamine transferase (358 aa).

UDP-N-acetyl-alpha-D-glucosamine contacts are provided by residues 11–13 (TGG), N122, R161, S189, I243, 262–267 (ALTVCE), and Q288.

Belongs to the glycosyltransferase 28 family. MurG subfamily.

Its subcellular location is the cell inner membrane. The catalysed reaction is di-trans,octa-cis-undecaprenyl diphospho-N-acetyl-alpha-D-muramoyl-L-alanyl-D-glutamyl-meso-2,6-diaminopimeloyl-D-alanyl-D-alanine + UDP-N-acetyl-alpha-D-glucosamine = di-trans,octa-cis-undecaprenyl diphospho-[N-acetyl-alpha-D-glucosaminyl-(1-&gt;4)]-N-acetyl-alpha-D-muramoyl-L-alanyl-D-glutamyl-meso-2,6-diaminopimeloyl-D-alanyl-D-alanine + UDP + H(+). The protein operates within cell wall biogenesis; peptidoglycan biosynthesis. Its function is as follows. Cell wall formation. Catalyzes the transfer of a GlcNAc subunit on undecaprenyl-pyrophosphoryl-MurNAc-pentapeptide (lipid intermediate I) to form undecaprenyl-pyrophosphoryl-MurNAc-(pentapeptide)GlcNAc (lipid intermediate II). The protein is UDP-N-acetylglucosamine--N-acetylmuramyl-(pentapeptide) pyrophosphoryl-undecaprenol N-acetylglucosamine transferase of Coxiella burnetii (strain CbuK_Q154) (Coxiella burnetii (strain Q154)).